The chain runs to 321 residues: Sialic acid-binding periplasmic protein SiaP (321 aa).

The signal sequence occupies residues Met1–Ala22.

It belongs to the bacterial solute-binding protein 7 family. In terms of assembly, the complex comprises the extracytoplasmic solute receptor protein SiaP, and the two transmembrane proteins SiaQ and SiaM.

It localises to the periplasm. Functionally, part of the tripartite ATP-independent periplasmic (TRAP) transport system SiaPQM that catalyzes unidirectional Na(+)-dependent sialic acid uptake. Binds the common sialic acid N-acetylneuraminic acid (Neu5Ac) with a high affinity. This is Sialic acid-binding periplasmic protein SiaP from Vibrio cholerae serotype O1 (strain ATCC 39315 / El Tor Inaba N16961).